The following is a 367-amino-acid chain: Alanine racemase (367 aa).

The active-site Proton acceptor; specific for D-alanine is lysine 35. N6-(pyridoxal phosphate)lysine is present on lysine 35. A substrate-binding site is contributed by arginine 130. Tyrosine 258 serves as the catalytic Proton acceptor; specific for L-alanine. Methionine 306 lines the substrate pocket.

The protein belongs to the alanine racemase family. It depends on pyridoxal 5'-phosphate as a cofactor.

It carries out the reaction L-alanine = D-alanine. The protein operates within amino-acid biosynthesis; D-alanine biosynthesis; D-alanine from L-alanine: step 1/1. Catalyzes the interconversion of L-alanine and D-alanine. May also act on other amino acids. This Acinetobacter baumannii (strain SDF) protein is Alanine racemase (alr).